The chain runs to 124 residues: MDTTHNDNTPQRLMITDMRPLSLETIITSLTRDIITHKFIYLINHECIVRKLDERQATFTFLVNYEMKLLHKVGSTKYKKYTEYNTKYGTFPMPIFINHDGFLECIGIKPTKHTPIIYKYDLNP.

The DLNP; interaction with MAP1B motif lies at 121–124 (DLNP).

The protein belongs to the pneumovirus non-structural protein 2 family. As to quaternary structure, monomer (instable). Homomultimer. Heteromultimer with NS1. Interacts with host RIGI (via N-terminus); this interaction prevents host signaling pathway involved in interferon production. Interacts with host MAP1B/microtubule-associated protein 1B.

Its subcellular location is the host mitochondrion. Plays a major role in antagonizing the type I IFN-mediated antiviral response. Acts cooperatively with NS1 to repress activation and nuclear translocation of host IFN-regulatory factor IRF3. Interacts with the host cytoplasmic sensor of viral nucleic acids RIGI and prevents the interaction with its downstream partner MAVS. Together with NS2, participates in the proteasomal degradation of host STAT2, IRF3, IRF7, TBK1 and RIGI through a NS-degradasome involving CUL2 and Elongin-C. The degradasome requires an intact mitochondrial MAVS. Induces host SOCS1 expression. Induces activation of NF-kappa-B. Suppresses premature apoptosis by an NF-kappa-B-dependent, interferon-independent mechanism promoting continued viral replication. The sequence is that of Non-structural protein 2 (1B) from Human respiratory syncytial virus A (strain A2).